The primary structure comprises 107 residues: MKTADSSLLADIREVNLSYLLLAQRMLRDDYAASMFRLGFSNEVADILMRLSPAQLVKLASSSSLLCRFRFDDYSLLSALTQDVLGGALQQAHATILLARQPVEELA.

It belongs to the FlhD family. In terms of assembly, homodimer; disulfide-linked. Forms a heterohexamer composed of two FlhC and four FlhD subunits. Each FlhC binds a FlhD dimer, forming a heterotrimer, and a hexamer assembles by dimerization of two heterotrimers.

The protein localises to the cytoplasm. In terms of biological role, functions in complex with FlhC as a master transcriptional regulator that regulates transcription of several flagellar and non-flagellar operons by binding to their promoter region. Activates expression of class 2 flagellar genes, including fliA, which is a flagellum-specific sigma factor that turns on the class 3 genes. Also regulates genes whose products function in a variety of physiological pathways. This chain is Flagellar transcriptional regulator FlhD, found in Bordetella bronchiseptica (strain ATCC BAA-588 / NCTC 13252 / RB50) (Alcaligenes bronchisepticus).